A 535-amino-acid chain; its full sequence is T-complex protein 1 subunit zeta 1 (535 aa).

Belongs to the TCP-1 chaperonin family. As to quaternary structure, heterooligomeric complex of about 850 to 900 kDa that forms two stacked rings, 12 to 16 nm in diameter.

The protein resides in the cytoplasm. Functionally, molecular chaperone; assists the folding of proteins upon ATP hydrolysis. Known to play a role, in vitro, in the folding of actin and tubulin. The protein is T-complex protein 1 subunit zeta 1 of Arabidopsis thaliana (Mouse-ear cress).